Here is a 210-residue protein sequence, read N- to C-terminus: Peroxiredoxin-5, mitochondrial (210 aa).

The transit peptide at 1 to 48 directs the protein to the mitochondrion; the sequence is MLQLGLRVLGCKASSVLRASTCLAGRAGRKEAGWECGGARSFSSSAVT. Residues 52-210 form the Thioredoxin domain; it reads IKVGDAIPSV…SLAPNILSQL (159 aa). Lysine 70 is subject to N6-acetyllysine; alternate. Lysine 70 carries the post-translational modification N6-succinyllysine; alternate. Lysine 71 bears the N6-acetyllysine mark. Lysine 79 carries the post-translational modification N6-acetyllysine; alternate. Lysine 79 is subject to N6-succinyllysine; alternate. Catalysis depends on cysteine 96, which acts as the Cysteine sulfenic acid (-SOH) intermediate. The S-palmitoyl cysteine moiety is linked to residue cysteine 96. Cysteine 96 and cysteine 200 are disulfide-bonded. At lysine 112 the chain carries N6-succinyllysine. 2 positions are modified to phosphoserine: serine 167 and serine 178. The Microbody targeting signal motif lies at 208-210; that stretch reads SQL.

It belongs to the peroxiredoxin family. Prx5 subfamily. As to quaternary structure, monomer. In terms of processing, S-palmitoylated. Palmitoylation occurs on the active site, inhibiting its reactivity; therefore PRDX5 palmitoylation status determines its antioxidant capacity. S-palmitoylated. Depalmitoylated by ABHD10. As to expression, widely expressed.

The protein localises to the mitochondrion. It is found in the cytoplasm. Its subcellular location is the peroxisome matrix. It carries out the reaction a hydroperoxide + [thioredoxin]-dithiol = an alcohol + [thioredoxin]-disulfide + H2O. Thiol-specific peroxidase that catalyzes the reduction of hydrogen peroxide and organic hydroperoxides to water and alcohols, respectively. Plays a role in cell protection against oxidative stress by detoxifying peroxides and as sensor of hydrogen peroxide-mediated signaling events. The protein is Peroxiredoxin-5, mitochondrial of Mus musculus (Mouse).